The chain runs to 251 residues: Aliphatic sulfonates import ATP-binding protein SsuB (251 aa).

The region spanning 19-238 is the ABC transporter domain; sequence GELRHVDKWY…PGEPGAHTER (220 aa). 51 to 58 contributes to the ATP binding site; it reads GRSGSGKS.

The protein belongs to the ABC transporter superfamily. Aliphatic sulfonates importer (TC 3.A.1.17.2) family. As to quaternary structure, the complex is composed of two ATP-binding proteins (SsuB), two transmembrane proteins (SsuC) and a solute-binding protein (SsuA).

It localises to the cell membrane. The enzyme catalyses ATP + H2O + aliphatic sulfonate-[sulfonate-binding protein]Side 1 = ADP + phosphate + aliphatic sulfonateSide 2 + [sulfonate-binding protein]Side 1.. In terms of biological role, part of the ABC transporter complex SsuABC involved in aliphatic sulfonates import. Responsible for energy coupling to the transport system. The sequence is that of Aliphatic sulfonates import ATP-binding protein SsuB from Mycobacterium avium (strain 104).